We begin with the raw amino-acid sequence, 179 residues long: 3-hydroxyanthranilate 3,4-dioxygenase (179 aa).

R47 contributes to the O2 binding site. The Fe cation site is built by H51, E57, and H96. E57 serves as a coordination point for substrate. Residues R100 and E110 each coordinate substrate. Residues C125, C128, C162, and C165 each coordinate Fe cation.

It belongs to the 3-HAO family. Fe(2+) is required as a cofactor.

The catalysed reaction is 3-hydroxyanthranilate + O2 = (2Z,4Z)-2-amino-3-carboxymuconate 6-semialdehyde. The protein operates within cofactor biosynthesis; NAD(+) biosynthesis; quinolinate from L-kynurenine: step 3/3. Functionally, catalyzes the oxidative ring opening of 3-hydroxyanthranilate to 2-amino-3-carboxymuconate semialdehyde, which spontaneously cyclizes to quinolinate. The polypeptide is 3-hydroxyanthranilate 3,4-dioxygenase (Bacillus cereus (strain 03BB102)).